A 138-amino-acid polypeptide reads, in one-letter code: Basic phospholipase A2 trimucrotoxin (138 aa).

A signal peptide spans methionine 1 to glycine 16. Disulfide bonds link cysteine 42-cysteine 131, cysteine 44-cysteine 60, cysteine 59-cysteine 111, cysteine 65-cysteine 138, cysteine 66-cysteine 104, cysteine 73-cysteine 97, and cysteine 91-cysteine 102. Tyrosine 43, glycine 45, and glycine 47 together coordinate Ca(2+). The active site involves histidine 63. Aspartate 64 contributes to the Ca(2+) binding site. The active site involves aspartate 105.

Belongs to the phospholipase A2 family. Group II subfamily. D49 sub-subfamily. In terms of assembly, homodimer. Ca(2+) serves as cofactor. Expressed by the venom gland.

The protein resides in the secreted. It catalyses the reaction a 1,2-diacyl-sn-glycero-3-phosphocholine + H2O = a 1-acyl-sn-glycero-3-phosphocholine + a fatty acid + H(+). Snake venom phospholipase A2 (PLA2) that displays edema-inducing activities, as well as presynaptic neurotoxicity and low myotoxicity. PLA2 catalyzes the calcium-dependent hydrolysis of the 2-acyl groups in 3-sn-phosphoglycerides. This chain is Basic phospholipase A2 trimucrotoxin, found in Protobothrops mucrosquamatus (Taiwan habu).